The sequence spans 161 residues: Transcription elongation factor GreA (161 aa).

The protein belongs to the GreA/GreB family.

Its function is as follows. Necessary for efficient RNA polymerase transcription elongation past template-encoded arresting sites. The arresting sites in DNA have the property of trapping a certain fraction of elongating RNA polymerases that pass through, resulting in locked ternary complexes. Cleavage of the nascent transcript by cleavage factors such as GreA or GreB allows the resumption of elongation from the new 3'terminus. GreA releases sequences of 2 to 3 nucleotides. The chain is Transcription elongation factor GreA from Desulfotalea psychrophila (strain LSv54 / DSM 12343).